A 339-amino-acid chain; its full sequence is Ketol-acid reductoisomerase (NADP(+)) (339 aa).

Residues 1–182 enclose the KARI N-terminal Rossmann domain; the sequence is MRVYYDRDAD…GGGRSGIIET (182 aa). Residues 24 to 27, lysine 48, serine 51, threonine 53, and 83 to 86 each bind NADP(+); these read YGSQ and DELQ. Histidine 108 is a catalytic residue. Glycine 134 provides a ligand contact to NADP(+). The KARI C-terminal knotted domain maps to 183 to 328; it reads TFQEECETDL…AKLRGMMPWI (146 aa). Aspartate 191, glutamate 195, glutamate 227, and glutamate 231 together coordinate Mg(2+). Substrate is bound at residue serine 252.

The protein belongs to the ketol-acid reductoisomerase family. Requires Mg(2+) as cofactor.

The catalysed reaction is (2R)-2,3-dihydroxy-3-methylbutanoate + NADP(+) = (2S)-2-acetolactate + NADPH + H(+). The enzyme catalyses (2R,3R)-2,3-dihydroxy-3-methylpentanoate + NADP(+) = (S)-2-ethyl-2-hydroxy-3-oxobutanoate + NADPH + H(+). It functions in the pathway amino-acid biosynthesis; L-isoleucine biosynthesis; L-isoleucine from 2-oxobutanoate: step 2/4. It participates in amino-acid biosynthesis; L-valine biosynthesis; L-valine from pyruvate: step 2/4. Functionally, involved in the biosynthesis of branched-chain amino acids (BCAA). Catalyzes an alkyl-migration followed by a ketol-acid reduction of (S)-2-acetolactate (S2AL) to yield (R)-2,3-dihydroxy-isovalerate. In the isomerase reaction, S2AL is rearranged via a Mg-dependent methyl migration to produce 3-hydroxy-3-methyl-2-ketobutyrate (HMKB). In the reductase reaction, this 2-ketoacid undergoes a metal-dependent reduction by NADPH to yield (R)-2,3-dihydroxy-isovalerate. This Allorhizobium ampelinum (strain ATCC BAA-846 / DSM 112012 / S4) (Agrobacterium vitis (strain S4)) protein is Ketol-acid reductoisomerase (NADP(+)).